Reading from the N-terminus, the 567-residue chain is 2-succinyl-5-enolpyruvyl-6-hydroxy-3-cyclohexene-1-carboxylate synthase (567 aa).

Belongs to the TPP enzyme family. MenD subfamily. In terms of assembly, homodimer. Mg(2+) is required as a cofactor. It depends on Mn(2+) as a cofactor. The cofactor is thiamine diphosphate.

The enzyme catalyses isochorismate + 2-oxoglutarate + H(+) = 5-enolpyruvoyl-6-hydroxy-2-succinyl-cyclohex-3-ene-1-carboxylate + CO2. Its pathway is quinol/quinone metabolism; 1,4-dihydroxy-2-naphthoate biosynthesis; 1,4-dihydroxy-2-naphthoate from chorismate: step 2/7. It participates in quinol/quinone metabolism; menaquinone biosynthesis. In terms of biological role, catalyzes the thiamine diphosphate-dependent decarboxylation of 2-oxoglutarate and the subsequent addition of the resulting succinic semialdehyde-thiamine pyrophosphate anion to isochorismate to yield 2-succinyl-5-enolpyruvyl-6-hydroxy-3-cyclohexene-1-carboxylate (SEPHCHC). The protein is 2-succinyl-5-enolpyruvyl-6-hydroxy-3-cyclohexene-1-carboxylate synthase of Shewanella loihica (strain ATCC BAA-1088 / PV-4).